The primary structure comprises 312 residues: Formimidoylglutamase (312 aa).

Mn(2+)-binding residues include His128, Asp153, His155, Asp157, Asp240, and Asp242.

The protein belongs to the arginase family. It depends on Mn(2+) as a cofactor.

The catalysed reaction is N-formimidoyl-L-glutamate + H2O = formamide + L-glutamate. The protein operates within amino-acid degradation; L-histidine degradation into L-glutamate; L-glutamate from N-formimidoyl-L-glutamate (hydrolase route): step 1/1. Catalyzes the conversion of N-formimidoyl-L-glutamate to L-glutamate and formamide. The polypeptide is Formimidoylglutamase (Enterobacter sp. (strain 638)).